The primary structure comprises 160 residues: MIHESIEEFLAALPRSGALIGLDLGTKTIGVAVTDGLRRIATPLLTIRRTKFTEDAARLRAITAERGLVGIVLGLPRNMDGSEGPRAQSTRAFARNLSQVLPLPIGYWDERLSTVAAERALIEADTSRKRRAEVIDHVAAGYILQGVLDRLDWLGRERNA.

Belongs to the YqgF nuclease family.

It is found in the cytoplasm. Its function is as follows. Could be a nuclease involved in processing of the 5'-end of pre-16S rRNA. The chain is Putative pre-16S rRNA nuclease from Cereibacter sphaeroides (strain ATCC 17025 / ATH 2.4.3) (Rhodobacter sphaeroides).